The sequence spans 595 residues: Beta-(1--&gt;2)glucan export ATP-binding/permease protein NdvA (595 aa).

Residues 21–301 enclose the ABC transmembrane type-1 domain; it reads SLLICSANVM…MSNFINLTIS (281 aa). A run of 5 helical transmembrane segments spans residues 22 to 42, 55 to 75, 129 to 149, 152 to 172, and 248 to 268; these read LLIC…PILF, IIPT…AYVL, IWLD…VLIP, FNMN…YVLI, and MAST…VAKG. An ABC transporter domain is found at 335-569; it reads IQFHHVTYKF…GGRFYKLLKA (235 aa). 368 to 375 is a binding site for ATP; it reads GPTGAGKT.

The protein belongs to the ABC transporter superfamily. Beta-(1--&gt;2)glucan exporter (TC 3.A.1.108.1) family. As to quaternary structure, homodimer.

It localises to the cell inner membrane. It carries out the reaction [(1-&gt;2)-beta-D-glucosyl](n)(in) + ATP + H2O = [(1-&gt;2)-beta-D-glucosyl](n)(out) + ADP + phosphate + H(+). In terms of biological role, involved in beta-(1--&gt;2)glucan export. Transmembrane domains (TMD) form a pore in the inner membrane and the ATP-binding domain (NBD) is responsible for energy generation. The sequence is that of Beta-(1--&gt;2)glucan export ATP-binding/permease protein NdvA from Bartonella henselae (strain ATCC 49882 / DSM 28221 / CCUG 30454 / Houston 1) (Rochalimaea henselae).